The primary structure comprises 1507 residues: Transient receptor potential cation channel subfamily M member 2 (1507 aa).

Residues 1 to 11 (MEPLDQRRTDS) show a composition bias toward basic and acidic residues. The interval 1–24 (MEPLDQRRTDSDQEEGFGVQSRRA) is disordered. The Cytoplasmic segment spans residues 1-751 (MEPLDQRRTD…WWGQLCVDNG (751 aa)). 5 residues coordinate ADP-D-ribose: Thr173, Asn178, Arg301, Gly332, and Thr335. Thr739 bears the Phosphothreonine mark. The stretch at 752–768 (LWRIILCMLAFPLLFTG) is an intramembrane region. The Cytoplasmic segment spans residues 769-793 (FISFREKRLQALCRLARVRAFFNAP). A helical transmembrane segment spans residues 794–814 (VVIFYLNILSYFAFLCLFAYV). Residues 815 to 825 (LMVDFQPSPSW) are Extracellular-facing. The chain crosses the membrane as a helical span at residues 826-846 (CEYLIYLWLFSLVCEETRQLF). Residues Glu841 and Gln844 each coordinate Ca(2+). The Cytoplasmic segment spans residues 847-865 (YDPDGCGLMKMASLYFSDF). Residues 866–886 (WNKLDVGAILLFIAGLTCRLI) form a helical membrane-spanning segment. Position 867 (Asn867) interacts with Ca(2+). Over 887–894 (PATLYPGR) the chain is Extracellular. A helical membrane pass occupies residues 895–915 (IILSLDFIMFCLRLMHIFTIS). Residues 916-927 (KTLGPKIIIVKR) are Cytoplasmic-facing. A helical membrane pass occupies residues 928–948 (MMKDVFFFLFLLAVWVVSFGV). The Extracellular portion of the chain corresponds to 949–968 (AKQAILIHNESRVDWIFRGV). An intramembrane region (pore-forming) is located at residues 969 to 983 (IYHSYLTIFGQIPTY). The short motif at 977-980 (FGQI) is the Selectivity filter element. Residues 984–1020 (IDGVNFSMDQCSPNGTDPYKPKCPESDWTGQAPAFPE) are Extracellular-facing. Cysteines 994 and 1006 form a disulfide. Residues 1021 to 1042 (WLTVTLLCLYLLFANILLLNLL) form a helical membrane-spanning segment. Over 1043–1077 (IAMFNYTFQEVQEHTDQIWKFQRHDLIEEYHGRPP) the chain is Cytoplasmic. Residue Glu1071 coordinates Ca(2+). An intramembrane segment occupies 1078–1096 (APPPLILLSHLQLLIKRIV). Residues 1097 to 1507 (LKIPAKRHKQ…KVASLFGAHF (411 aa)) are Cytoplasmic-facing. Positions 1351-1502 (RWKRNQGGGI…KKILQKVASL (152 aa)) constitute a Nudix hydrolase domain. Residue Ser1379 coordinates ADP-D-ribose. Positions 1387-1408 (GSREPGKMLPRKLKQVLQQEYW) match the Nudix box motif. ADP-D-ribose contacts are provided by Asp1428, Arg1430, Tyr1489, and Asn1491.

It belongs to the transient receptor (TC 1.A.4) family. LTrpC subfamily. TRPM2 sub-subfamily. In terms of assembly, homotetramer. In terms of processing, phosphorylation of TRPM2 at Thr-739 by protein kinase C (PKC) counteracts the effect of cytosolic Ca(2+) and elevates the temperature threshold. In terms of tissue distribution, detected in pancreas beta-cells. Detected in fetal brain cortex neurons (at protein level).

The protein resides in the cell membrane. The protein localises to the perikaryon. Its subcellular location is the cell projection. It is found in the cytoplasmic vesicle. It localises to the lysosome. The catalysed reaction is Ca(2+)(in) = Ca(2+)(out). It carries out the reaction Na(+)(in) = Na(+)(out). Its activity is regulated as follows. Activated by intracellular ADP-ribose, beta-NAD (NAD(+)) and similar compounds, and by oxidative stress caused by reactive oxygen or nitrogen species. Ca(2+) and PI(4,5)P2 are required for channel opening by ADP-ribose. Activation by ADP-ribose and beta-NAD is strongly increased by moderate heat (35 to 40 degrees Celsius). Likewise, reactive oxygen species lower the threshold for activation by moderate heat (37 degrees Celsius). Activated by moderate heat (35 to 40 degrees Celsius). Inactivated by exposure to extracellular pH between 4.0 and 6.5; irreversibly inactivated when open channels are exposed to extracellular pH between 4.0 and 6.5, while pre-exposure of closed channels to extracellular pH 5.5 gives rise to currents that rapidly inactivate, but protects against irreversible inactivation. Inactivated by intracellular ATP. Activated by arachidonic acid. Inhibited by 2-aminoethyl diphenylborinate (2-APB). Its function is as follows. Nonselective, voltage-independent cation channel that mediates Na(+) and Ca(2+) influx, leading to increased cytoplasmic Ca(2+) levels. Functions as a ligand-gated ion channel gated by intracellular adenosine diphosphate ribose (ADP-ribose), Ca(2+), warm temperature, and oxidative stress. The precise physiological activators are under debate; the true, physiological activators may be ADP-ribose and ADP-ribose-2'-phosphate. Binding of ADP-ribose to the cytoplasmic Nudix domain causes a conformation change; the channel is primed but still requires Ca(2+) binding to trigger channel opening. Extracellular Ca(2+) passes through the channel and increases channel activity. Also contributes to Ca(2+) release from intracellular stores in response to ADP-ribose. Plays a role in numerous processes that involve signaling via intracellular Ca(2+) levels. Besides, mediates the release of lysosomal Zn(2+) stores in response to reactive oxygen species, leading to increased cytosolic Zn(2+) levels. Plays a role in insulin secretion, a process that requires increased cytoplasmic Ca(2+) levels. Required for normal IFNG and cytokine secretion and normal innate immune immunity in response to bacterial infection. Required for normal phagocytosis and cytokine release by macrophages exposed to zymosan (in vitro). Plays a role in dendritic cell differentiation and maturation, and in dendritic cell chemotaxis via its role in regulating cytoplasmic Ca(2+) levels. Plays a role in the regulation of the reorganization of the actin cytoskeleton and filopodia formation in response to reactive oxygen species via its function in increasing cytoplasmic Ca(2+) and Zn(2+) levels. Confers susceptibility to cell death following oxidative stress. The protein is Transient receptor potential cation channel subfamily M member 2 of Rattus norvegicus (Rat).